A 329-amino-acid chain; its full sequence is 4-hydroxythreonine-4-phosphate dehydrogenase (329 aa).

Substrate-binding residues include His136 and Thr137. Residues His166, His211, and His266 each coordinate a divalent metal cation. Lys274, Asn283, and Arg292 together coordinate substrate.

Belongs to the PdxA family. As to quaternary structure, homodimer. Requires Zn(2+) as cofactor. Mg(2+) is required as a cofactor. It depends on Co(2+) as a cofactor.

The protein resides in the cytoplasm. The catalysed reaction is 4-(phosphooxy)-L-threonine + NAD(+) = 3-amino-2-oxopropyl phosphate + CO2 + NADH. It functions in the pathway cofactor biosynthesis; pyridoxine 5'-phosphate biosynthesis; pyridoxine 5'-phosphate from D-erythrose 4-phosphate: step 4/5. Functionally, catalyzes the NAD(P)-dependent oxidation of 4-(phosphooxy)-L-threonine (HTP) into 2-amino-3-oxo-4-(phosphooxy)butyric acid which spontaneously decarboxylates to form 3-amino-2-oxopropyl phosphate (AHAP). In Escherichia coli O6:H1 (strain CFT073 / ATCC 700928 / UPEC), this protein is 4-hydroxythreonine-4-phosphate dehydrogenase.